Reading from the N-terminus, the 288-residue chain is Ribosome biogenesis GTPase A (288 aa).

The region spanning 14 to 179 (RRQVTEKLKL…LLDTPGILWP (166 aa)) is the CP-type G domain. Residues 58 to 61 (NKVD), 131 to 136 (NVGKST), and Gly-175 each bind GTP.

Belongs to the TRAFAC class YlqF/YawG GTPase family. MTG1 subfamily. Interacts with ctc. Interacts with the immature 50S ribosome subunit. 2 molecules of rbgA bind to one 50S subunit.

The protein resides in the cytoplasm. Functionally, essential protein that is required for a late step of 50S ribosomal subunit assembly. Has GTPase activity that is stimulated by interaction with the immature 50S ribosome subunit. Binds to the 23S rRNA. Required for the association of ribosomal proteins rplP and rpmA with the large subunit. This Priestia megaterium (strain DSM 319 / IMG 1521) (Bacillus megaterium) protein is Ribosome biogenesis GTPase A.